A 418-amino-acid polypeptide reads, in one-letter code: Gamma-glutamyl phosphate reductase (418 aa).

This sequence belongs to the gamma-glutamyl phosphate reductase family.

The protein localises to the cytoplasm. It carries out the reaction L-glutamate 5-semialdehyde + phosphate + NADP(+) = L-glutamyl 5-phosphate + NADPH + H(+). It functions in the pathway amino-acid biosynthesis; L-proline biosynthesis; L-glutamate 5-semialdehyde from L-glutamate: step 2/2. Its function is as follows. Catalyzes the NADPH-dependent reduction of L-glutamate 5-phosphate into L-glutamate 5-semialdehyde and phosphate. The product spontaneously undergoes cyclization to form 1-pyrroline-5-carboxylate. This chain is Gamma-glutamyl phosphate reductase, found in Geotalea uraniireducens (strain Rf4) (Geobacter uraniireducens).